The primary structure comprises 310 residues: Ribosomal RNA small subunit methyltransferase H (310 aa).

Residues 33-35, Asp52, Phe79, Asp98, and Gln105 each bind S-adenosyl-L-methionine; that span reads GGH.

It belongs to the methyltransferase superfamily. RsmH family.

The protein resides in the cytoplasm. The enzyme catalyses cytidine(1402) in 16S rRNA + S-adenosyl-L-methionine = N(4)-methylcytidine(1402) in 16S rRNA + S-adenosyl-L-homocysteine + H(+). In terms of biological role, specifically methylates the N4 position of cytidine in position 1402 (C1402) of 16S rRNA. This Campylobacter jejuni (strain RM1221) protein is Ribosomal RNA small subunit methyltransferase H.